Consider the following 163-residue polypeptide: Ribosome maturation factor RimP (163 aa).

The tract at residues 66–85 is disordered; the sequence is ALDRDDPVPGPPYELEVSSP.

The protein belongs to the RimP family.

It localises to the cytoplasm. Its function is as follows. Required for maturation of 30S ribosomal subunits. This is Ribosome maturation factor RimP from Kocuria rhizophila (strain ATCC 9341 / DSM 348 / NBRC 103217 / DC2201).